Here is a 29-residue protein sequence, read N- to C-terminus: Kalata-B11 (29 aa).

Residues 1–29 (GLPVCGETCFGGTCNTPGCSCTDPICTRD) constitute a cross-link (cyclopeptide (Gly-Asp)). Cystine bridges form between cysteine 5/cysteine 19, cysteine 9/cysteine 21, and cysteine 14/cysteine 26.

This is a cyclic peptide.

Probably participates in a plant defense mechanism. The sequence is that of Kalata-B11 from Oldenlandia affinis.